Consider the following 324-residue polypeptide: Cytochrome c biogenesis protein CcsA (324 aa).

8 helical membrane-spanning segments follow: residues 15 to 35 (FSIV…DEII), 44 to 64 (GMIA…IYSG), 71 to 91 (LYES…VPYF), 98 to 118 (LSTI…SGLL), 143 to 163 (MILG…LLVL), 228 to 248 (VISL…VWAN), 255 to 275 (WNWD…AVYL), and 289 to 309 (AIVA…VNLL).

Belongs to the CcmF/CycK/Ccl1/NrfE/CcsA family. May interact with Ccs1.

The protein localises to the plastid. It localises to the chloroplast thylakoid membrane. Functionally, required during biogenesis of c-type cytochromes (cytochrome c6 and cytochrome f) at the step of heme attachment. The chain is Cytochrome c biogenesis protein CcsA from Daucus carota (Wild carrot).